A 317-amino-acid chain; its full sequence is Ret finger protein-like 1 (317 aa).

Residues 40-82 form an RING-type zinc finger; sequence CPVCSDYLEKPMSLECGCAVCFKCINSLQKEPHGEDLLCCCCS. One can recognise a B30.2/SPRY domain in the interval 107-301; the sequence is EPKLKKILQM…DKSVLSICPV (195 aa).

In terms of processing, phosphorylated by PKC and CDK1. The antiproliferative effect seems to be positively regulated by PKC phosphorylation and negatively by CDK1 phosphorylation. In terms of tissue distribution, seems to be expressed in prostate and less abundantly in adult brain, fetal liver, and fetal kidney.

It localises to the cytoplasm. The protein localises to the nucleus. In terms of biological role, negatively regulates the G2-M phase transition, possibly by promoting cyclin B1/CCNB1 and CDK1 proteasomal degradation and thereby preventing their accumulation during interphase. The polypeptide is Ret finger protein-like 1 (RFPL1) (Homo sapiens (Human)).